Here is a 472-residue protein sequence, read N- to C-terminus: UDP-N-acetylmuramate--L-alanine ligase (472 aa).

123–129 (GSHGKTT) lines the ATP pocket.

The protein belongs to the MurCDEF family.

It localises to the cytoplasm. It carries out the reaction UDP-N-acetyl-alpha-D-muramate + L-alanine + ATP = UDP-N-acetyl-alpha-D-muramoyl-L-alanine + ADP + phosphate + H(+). It participates in cell wall biogenesis; peptidoglycan biosynthesis. In terms of biological role, cell wall formation. The polypeptide is UDP-N-acetylmuramate--L-alanine ligase (Solibacter usitatus (strain Ellin6076)).